Here is an 823-residue protein sequence, read N- to C-terminus: Putative ankyrin repeat domain-containing protein 20A3 (823 aa).

ANK repeat units follow at residues 66–95 (QHRTALHLACASGHVQVVTLLVNRKCQIDV), 99–128 (ENRTPLIQAVHCQEEACAVILLEHGANPNL), 132–161 (YGNTALHYAVYSESTSLAEKLLSHGAHIEA), 165–194 (DNNTPLLFAIICKKEKMVEFLLKRKASSHA), and 198–227 (LRRSALMLAVYYDSPGIVNILLKQNIDVFA). Disordered regions lie at residues 301–343 (VPEK…EVED) and 355–402 (VQTL…LSEN). Over residues 372-384 (QERHERSEKKQPQ) the composition is skewed to basic and acidic residues. 3 coiled-coil regions span residues 431–480 (KKLK…KQLE), 571–724 (AFRY…NNST), and 776–805 (LVLEEKSKKLMNECDHLKESLFQYEREKTE).

In Homo sapiens (Human), this protein is Putative ankyrin repeat domain-containing protein 20A3.